The primary structure comprises 340 residues: Eukaryotic translation initiation factor 3 subunit I (340 aa).

WD repeat units lie at residues 8 to 47, 50 to 89, 91 to 135, 150 to 189, 194 to 233, and 291 to 330; these read GHER…RLGT, GHQG…CVKV, DFPT…GEGN, CEQS…QLQN, EFDY…VMKT, and GHFG…FDFM.

Belongs to the eIF-3 subunit I family. In terms of assembly, component of the eukaryotic translation initiation factor 3 (eIF-3) complex.

Its subcellular location is the cytoplasm. In terms of biological role, component of the eukaryotic translation initiation factor 3 (eIF-3) complex, which is involved in protein synthesis of a specialized repertoire of mRNAs and, together with other initiation factors, stimulates binding of mRNA and methionyl-tRNAi to the 40S ribosome. The eIF-3 complex specifically targets and initiates translation of a subset of mRNAs involved in cell proliferation. In Coccidioides immitis (strain RS) (Valley fever fungus), this protein is Eukaryotic translation initiation factor 3 subunit I.